Here is a 198-residue protein sequence, read N- to C-terminus: V-type ATP synthase subunit E 1 (198 aa).

This sequence belongs to the V-ATPase E subunit family.

Produces ATP from ADP in the presence of a proton gradient across the membrane. The chain is V-type ATP synthase subunit E 1 from Clostridium tetani (strain Massachusetts / E88).